We begin with the raw amino-acid sequence, 258 residues long: Protein T1 (258 aa).

Residues 1–17 form the signal peptide; the sequence is MRRLCIILLVYVYATFA. N-linked (GlcNAc...) asparagine; by host glycosylation is found at Asn67, Asn151, and Asn172.

It belongs to the poxviruses A41 family.

The protein is Protein T1 of Rabbit fibroma virus (strain Kasza) (RFV).